Here is a 121-residue protein sequence, read N- to C-terminus: Small ribosomal subunit protein uS13 (121 aa).

The tract at residues 97–121 (VRGQRTRTNARTRRGARKTVAGKKK) is disordered. Over residues 100–121 (QRTRTNARTRRGARKTVAGKKK) the composition is skewed to basic residues.

The protein belongs to the universal ribosomal protein uS13 family. Part of the 30S ribosomal subunit. Forms a loose heterodimer with protein S19. Forms two bridges to the 50S subunit in the 70S ribosome.

In terms of biological role, located at the top of the head of the 30S subunit, it contacts several helices of the 16S rRNA. In the 70S ribosome it contacts the 23S rRNA (bridge B1a) and protein L5 of the 50S subunit (bridge B1b), connecting the 2 subunits; these bridges are implicated in subunit movement. Contacts the tRNAs in the A and P-sites. The polypeptide is Small ribosomal subunit protein uS13 (Synechococcus sp. (strain CC9311)).